The chain runs to 1491 residues: CLIP-associating protein (1491 aa).

4 HEAT repeats span residues 44–82 (CTDMGFLIDGLMPWLTGSHFKIAQKSLEAFSELIKRLGS), 85–123 (NAYTATVLPHVIDRLGDSRDTVREKAQLLLRDLMEHRVL), 163–201 (QLSVRVYIPPVCALLGDPTVNVREAAIQTLVEIYKHVGD), and 402–440 (DAFCWSILEHLINLIQNSAKVIASASTIALKYIIKYTHA). Disordered stretches follow at residues 537–586 (RERE…AVDT) and 600–739 (LYSR…NNPV). Gly residues predominate over residues 542–551 (GGGGGTGTGT). The segment covering 569–580 (GTLQKPTPSMRS) has biased composition (polar residues). A phosphoserine mark is found at Ser-582, Ser-626, and Ser-634. Over residues 632 to 646 (LNSNSGGTPATTPGS) the composition is skewed to polar residues. Thr-648 carries the phosphothreonine modification. Polar residues-rich tracts occupy residues 657-671 (VSQSQPGSRSTSPST) and 699-712 (PRSTASSRETSPTR). 5 positions are modified to phosphoserine: Ser-806, Ser-817, Ser-820, Ser-822, and Ser-824. 2 HEAT repeats span residues 874-912 (QQQLKCVLDMFRKMFMDTHTKVYSLFLDTVTELILVHAN) and 955-993 (QLQLKELFRIISDSTQTPTTKTRIAILRFLTDLANTYCK). 2 disordered regions span residues 1065-1127 (HMRR…SVEQ) and 1167-1205 (GHLQYHDQGQQDSCASLSSNSKTQSSANTTQSNTPESAT). Composition is skewed to low complexity over residues 1070–1097 (SQSCNSGANSPSSSPLSSSSPKPLQSPS), 1111–1124 (LSISSTSPRSRQSS), and 1181–1200 (ASLSSNSKTQSSANTTQSNT). 3 positions are modified to phosphoserine: Ser-1120, Ser-1123, and Ser-1124. 2 HEAT repeats span residues 1289-1327 (NKHFRSIMRMLLNILEAEHTDVVIAGLHVLSKIMRSNKM) and 1408-1446 (DAHLDIVFPNLARSADDTQSMVRKAAVFCIVKLYFVLGE).

The protein belongs to the CLASP family. In terms of assembly, interacts with CLIP-190 and microtubules. Expressed in testis and ovary.

Its subcellular location is the cytoplasm. The protein resides in the cytoskeleton. It is found in the nucleus. It localises to the microtubule organizing center. The protein localises to the centrosome. Its subcellular location is the spindle. The protein resides in the cell projection. It is found in the growth cone. It localises to the cleavage furrow. Microtubule plus-end tracking protein that promotes the stabilization of dynamic microtubules. Required for several aspects of mitotic spindle formation including the formation of the overlapping central spindle microtubules and kinetochore attachment. Required for the incorporation of tubulin subunits at the plus ends of kinetochore microtubules during poleward microtubule flux. Acts antagonistically to Klp10A and Klp67A to maintain metaphase spindle length. Also required for guidance of CNS axons downstream of Abl. May function to identify a subset of microtubules that probe the peripheral growth cone domain, where guidance signals exert their influence on cytoskeletal organization. Also required during oogenesis for the organization of the polarized microtubule network inside the 16-cell cyst that ensures oocyte differentiation. The protein is CLIP-associating protein (chb) of Drosophila melanogaster (Fruit fly).